A 448-amino-acid chain; its full sequence is Signal recognition particle 54 kDa protein (448 aa).

Residues G107–T114, D189–R193, and T247–D250 each bind GTP.

The protein belongs to the GTP-binding SRP family. SRP54 subfamily. As to quaternary structure, part of the signal recognition particle protein translocation system, which is composed of SRP and FtsY. Archaeal SRP consists of a 7S RNA molecule of 300 nucleotides and two protein subunits: SRP54 and SRP19.

It is found in the cytoplasm. The enzyme catalyses GTP + H2O = GDP + phosphate + H(+). Involved in targeting and insertion of nascent membrane proteins into the cytoplasmic membrane. Binds to the hydrophobic signal sequence of the ribosome-nascent chain (RNC) as it emerges from the ribosomes. The SRP-RNC complex is then targeted to the cytoplasmic membrane where it interacts with the SRP receptor FtsY. This Thermococcus kodakarensis (strain ATCC BAA-918 / JCM 12380 / KOD1) (Pyrococcus kodakaraensis (strain KOD1)) protein is Signal recognition particle 54 kDa protein.